Consider the following 164-residue polypeptide: B-phycoerythrin alpha chain (164 aa).

(2R,3E)-phycoerythrobilin-binding residues include cysteine 82 and cysteine 139.

The protein belongs to the phycobiliprotein family. Heteromer of 6 alpha, 6 beta and one gamma chain. In terms of processing, contains two covalently linked bilin chromophores.

The protein resides in the plastid. It localises to the chloroplast thylakoid membrane. Light-harvesting photosynthetic bile pigment-protein from the phycobiliprotein complex. In Porphyridium sordidum (Red alga), this protein is B-phycoerythrin alpha chain (cpeA).